The following is a 273-amino-acid chain: MDKYAVFGHPIKQSKSPFIHTLFARQTIQPLEYVAIEAPVDGFLNSVTHFFSNGGKGCNITVPFKEEAFQFADQLTDRAKLAGAVNTLKKLDDGIILGDNTDGEGLVQDLLQYQVPLQDKRILLIGAGGAARGVLLPLLKQNPSSITVVNRTYEKAEALAEIFSAYGAVEAVRMSDVTRSFDVIINSTSASLSGELPNISPVIFSKGSISYDMMYGKGKTVFNQWALDNDVYQAYDGLGMLVGQAAESFTVWRGLRPSSKQILRELRKNLEGM.

Shikimate-binding positions include 14-16 and Thr-61; that span reads SKS. The active-site Proton acceptor is the Lys-65. Asp-77 contributes to the NADP(+) binding site. 2 residues coordinate shikimate: Asn-86 and Asp-102. NADP(+) contacts are provided by residues 126 to 130, 150 to 155, and Met-213; these read GAGGA and NRTYEK. A shikimate-binding site is contributed by Tyr-215. Gly-237 is a binding site for NADP(+).

Belongs to the shikimate dehydrogenase family. As to quaternary structure, homodimer.

The catalysed reaction is shikimate + NADP(+) = 3-dehydroshikimate + NADPH + H(+). It participates in metabolic intermediate biosynthesis; chorismate biosynthesis; chorismate from D-erythrose 4-phosphate and phosphoenolpyruvate: step 4/7. Its function is as follows. Involved in the biosynthesis of the chorismate, which leads to the biosynthesis of aromatic amino acids. Catalyzes the reversible NADPH linked reduction of 3-dehydroshikimate (DHSA) to yield shikimate (SA). This Aliivibrio salmonicida (strain LFI1238) (Vibrio salmonicida (strain LFI1238)) protein is Shikimate dehydrogenase (NADP(+)).